The sequence spans 336 residues: Probable magnesium transporter NIPA2 (336 aa).

The Extracellular segment spans residues 1-7 (MEEMSPD). Residues 8–28 (NIHGVILAVSSSIFIGSSFII) form a helical membrane-spanning segment. Residues 29–55 (KKKGLKKAGVSGARAGEGGYGYLYEPW) are Cytoplasmic-facing. The helical transmembrane segment at 56 to 76 (WWAGMITMIVGEIANFAAYAF) threads the bilayer. At 77-79 (APA) the chain is on the extracellular side. A helical membrane pass occupies residues 80-100 (ILVTPLGALSIIFSAVLAHFI). At 101–104 (LEEK) the chain is on the cytoplasmic side. Residues 105 to 125 (LHMFGILGCVLCVVGSTTIVL) form a helical membrane-spanning segment. The Extracellular portion of the chain corresponds to 126–145 (HAPHEQGIESVKQVWHLATE). The chain crosses the membrane as a helical span at residues 146-166 (PGFLAYSAVVLVVVLALIFYY). Residues 167-179 (EPRYGKTHMIVYV) are Cytoplasmic-facing. A helical transmembrane segment spans residues 180–200 (GICSLMGSLTVMSVKAVAIAI). The Extracellular portion of the chain corresponds to 201-212 (KLTFSGMNQFKY). Residues 213 to 233 (FHAWIFIIVVTICCILQINYL) traverse the membrane as a helical segment. At 234–244 (NKALDNFNTAV) the chain is on the cytoplasmic side. The helical transmembrane segment at 245–265 (ISPVYYVMFTTFTILASMIMF) threads the bilayer. Topologically, residues 266–272 (KDWASQS) are extracellular. Residues 273 to 293 (GLQIATELCGFVTILSGTFLL) form a helical membrane-spanning segment. The Cytoplasmic segment spans residues 294 to 336 (HKTKDMGNSTSLRGSTSHSPRDTPVFINSGSSRSSNSTRPAIL). The tract at residues 303–336 (TSLRGSTSHSPRDTPVFINSGSSRSSNSTRPAIL) is disordered. The span at 321–330 (NSGSSRSSNS) shows a compositional bias: low complexity.

The protein belongs to the NIPA (TC 2.A.7) family. Homodimer.

It localises to the cell membrane. It is found in the early endosome. Functionally, acts as a Mg(2+) transporter. Can also transport other divalent cations such as Fe(2+), Sr(2+), Ba(2+), Mn(2+) and Co(2+) but to a much less extent than Mg(2+). This is Probable magnesium transporter NIPA2 from Arabidopsis thaliana (Mouse-ear cress).